A 326-amino-acid chain; its full sequence is Acetyl-coenzyme A carboxylase carboxyl transferase subunit alpha (326 aa).

The 255-residue stretch at 44–298 (KLETRAMQLR…KQALLDNLDE (255 aa)) folds into the CoA carboxyltransferase C-terminal domain.

It belongs to the AccA family. In terms of assembly, acetyl-CoA carboxylase is a heterohexamer composed of biotin carboxyl carrier protein (AccB), biotin carboxylase (AccC) and two subunits each of ACCase subunit alpha (AccA) and ACCase subunit beta (AccD).

The protein resides in the cytoplasm. It catalyses the reaction N(6)-carboxybiotinyl-L-lysyl-[protein] + acetyl-CoA = N(6)-biotinyl-L-lysyl-[protein] + malonyl-CoA. It functions in the pathway lipid metabolism; malonyl-CoA biosynthesis; malonyl-CoA from acetyl-CoA: step 1/1. Functionally, component of the acetyl coenzyme A carboxylase (ACC) complex. First, biotin carboxylase catalyzes the carboxylation of biotin on its carrier protein (BCCP) and then the CO(2) group is transferred by the carboxyltransferase to acetyl-CoA to form malonyl-CoA. In Trichormus variabilis (strain ATCC 29413 / PCC 7937) (Anabaena variabilis), this protein is Acetyl-coenzyme A carboxylase carboxyl transferase subunit alpha.